Consider the following 246-residue polypeptide: Envelope glycoprotein gp95 (246 aa).

The Extracellular segment spans residues 1–192; it reads IPSRPVGGPC…EWAVHLLKGL (192 aa). A glycan (N-linked (GlcNAc...) asparagine; by host) is linked at Asn-31. Cys-50 and Cys-86 are oxidised to a cystine. Positions 58 to 78 are fusion peptide; sequence GPTARIFASILAPGVAAAQAL. Residues 75–125 adopt a coiled-coil conformation; sequence AQALREIERLACWSVKQANLTTSLLGDLLDDVTSIRHAVLQNRAAIDFLLL. An N-linked (GlcNAc...) asparagine; by host glycan is attached at Asn-93. An immunosuppression region spans residues 114–130; it reads LQNRAAIDFLLLAHGHG. The cysteines at positions 131 and 138 are disulfide-linked. Asn-141 carries N-linked (GlcNAc...) asparagine; by host glycosylation. Residues 143-173 adopt a coiled-coil conformation; it reads SDQSESIQKKFQLMKEHVNKIGVDSDLIGSW. The helical transmembrane segment at 193–213 threads the bilayer; sequence LLGLVVILLLVVCLPCLLQML. S-palmitoyl cysteine; by host attachment occurs at residues Cys-205 and Cys-208. At 214–246 the chain is on the cytoplasmic side; sequence CGNRRKMINNSISYHTEYKKLQKACGQPESRIV.

Belongs to the Alpharetroviruses envelope glycoprotein family. In terms of assembly, heterodimer with the transmembrane protein. The mature envelope protein (Env) consists of a trimer of SU-TM heterodimers attached by a labile interchain disulfide bond. Interacts with the host cell entry receptor TVA isoforms pg900 and pg800; this interaction allows the viral attachment. As to quaternary structure, heterodimer with the surface protein. The mature envelope protein (Env) consists of a trimer of SU-TM heterodimers attached by a labile interchain disulfide bond. Post-translationally, specific enzymatic cleavages in vivo yield mature proteins. Envelope glycoproteins are synthesized as an inactive precursor that is N-glycosylated and processed likely by host cell furin or by a furin-like protease in the Golgi to yield the mature SU and TM proteins. The cleavage site between SU and TM requires the minimal sequence [KR]-X-[KR]-R. In terms of processing, the transmembrane protein is palmitoylated. Palmitoylation is necessary for glycoprotein function and infectivity.

The protein localises to the virion membrane. The protein resides in the host cell membrane. In terms of biological role, the surface protein (SU) attaches the virus to the host cell entry receptor TVA. This interaction triggers the refolding of the transmembrane protein (TM) thereby unmasking its fusion peptide and the formation of a reactive thiolate to activate its fusogenic potential. Fusion occurs at the host cell plasma membrane. Functionally, the transmembrane protein (TM) acts as a class I viral fusion protein. Under the current model, the protein has at least 3 conformational states: pre-fusion native state, pre-hairpin intermediate state, and post-fusion hairpin state. During viral and target cell membrane fusion, the coiled coil regions (heptad repeats) assume a trimer-of-hairpins structure, positioning the fusion peptide in close proximity to the C-terminal region of the ectodomain. The formation of this structure appears to drive apposition and subsequent fusion of viral and target cell membranes. Membranes fusion leads to delivery of the nucleocapsid into the cytoplasm. This is Envelope glycoprotein gp95 (env) from Rous sarcoma virus subgroup A (strain Schmidt-Ruppin) (RSV-SR-A).